A 68-amino-acid chain; its full sequence is Large ribosomal subunit protein bL31 (68 aa).

Zn(2+) contacts are provided by Cys17, Cys19, Cys37, and Cys40.

The protein belongs to the bacterial ribosomal protein bL31 family. Type A subfamily. In terms of assembly, part of the 50S ribosomal subunit. It depends on Zn(2+) as a cofactor.

Binds the 23S rRNA. The chain is Large ribosomal subunit protein bL31 from Dehalococcoides mccartyi (strain CBDB1).